The primary structure comprises 309 residues: tRNA uridine(34) hydroxylase (309 aa).

One can recognise a Rhodanese domain in the interval S126–S220. The active-site Cysteine persulfide intermediate is C180.

Belongs to the TrhO family.

The catalysed reaction is uridine(34) in tRNA + AH2 + O2 = 5-hydroxyuridine(34) in tRNA + A + H2O. Its function is as follows. Catalyzes oxygen-dependent 5-hydroxyuridine (ho5U) modification at position 34 in tRNAs. This is tRNA uridine(34) hydroxylase from Nostoc sp. (strain PCC 7120 / SAG 25.82 / UTEX 2576).